We begin with the raw amino-acid sequence, 225 residues long: Ribonuclease HII (225 aa).

Residues 35–225 (GLVAGVDEVG…SFRPCQISPD (191 aa)) form the RNase H type-2 domain. Residues D41, E42, and D137 each contribute to the a divalent metal cation site.

Belongs to the RNase HII family. Mn(2+) serves as cofactor. Requires Mg(2+) as cofactor.

The protein resides in the cytoplasm. The catalysed reaction is Endonucleolytic cleavage to 5'-phosphomonoester.. Functionally, endonuclease that specifically degrades the RNA of RNA-DNA hybrids. The chain is Ribonuclease HII from Nostoc sp. (strain PCC 7120 / SAG 25.82 / UTEX 2576).